A 389-amino-acid chain; its full sequence is Chalcone synthase 4-1 (389 aa).

Cysteine 164 is a catalytic residue.

Belongs to the thiolase-like superfamily. Chalcone/stilbene synthases family.

It catalyses the reaction (E)-4-coumaroyl-CoA + 3 malonyl-CoA + 3 H(+) = 2',4,4',6'-tetrahydroxychalcone + 3 CO2 + 4 CoA. It functions in the pathway secondary metabolite biosynthesis; flavonoid biosynthesis. Functionally, the primary product of this enzyme is 4,2',4',6'-tetrahydroxychalcone (also termed naringenin-chalcone or chalcone) which can under specific conditions spontaneously isomerize into naringenin. This is Chalcone synthase 4-1 (CHS4-1) from Medicago sativa (Alfalfa).